The following is a 283-amino-acid chain: Orotidine 5'-phosphate decarboxylase (283 aa).

The active-site Proton donor is the K97.

It belongs to the OMP decarboxylase family. Type 2 subfamily.

The enzyme catalyses orotidine 5'-phosphate + H(+) = UMP + CO2. The protein operates within pyrimidine metabolism; UMP biosynthesis via de novo pathway; UMP from orotate: step 2/2. This Clostridium botulinum (strain Kyoto / Type A2) protein is Orotidine 5'-phosphate decarboxylase.